The following is a 268-amino-acid chain: Tryptophan synthase alpha chain (268 aa).

Residues Glu-49 and Asp-60 each act as proton acceptor in the active site.

It belongs to the TrpA family. In terms of assembly, tetramer of two alpha and two beta chains.

It carries out the reaction (1S,2R)-1-C-(indol-3-yl)glycerol 3-phosphate + L-serine = D-glyceraldehyde 3-phosphate + L-tryptophan + H2O. It participates in amino-acid biosynthesis; L-tryptophan biosynthesis; L-tryptophan from chorismate: step 5/5. In terms of biological role, the alpha subunit is responsible for the aldol cleavage of indoleglycerol phosphate to indole and glyceraldehyde 3-phosphate. The polypeptide is Tryptophan synthase alpha chain (Shigella sonnei (strain Ss046)).